The following is a 331-amino-acid chain: 6-phosphogluconolactonase (331 aa).

This sequence belongs to the cycloisomerase 2 family.

The enzyme catalyses 6-phospho-D-glucono-1,5-lactone + H2O = 6-phospho-D-gluconate + H(+). It participates in carbohydrate degradation; pentose phosphate pathway; D-ribulose 5-phosphate from D-glucose 6-phosphate (oxidative stage): step 2/3. Functionally, catalyzes the hydrolysis of 6-phosphogluconolactone to 6-phosphogluconate. This is 6-phosphogluconolactonase from Salmonella arizonae (strain ATCC BAA-731 / CDC346-86 / RSK2980).